The primary structure comprises 508 residues: Steroid 17-alpha-hydroxylase/17,20 lyase (508 aa).

N202 is a binding site for substrate. C442 lines the heme pocket.

It belongs to the cytochrome P450 family. Requires heme as cofactor. Post-translationally, phosphorylation is necessary for 17,20-lyase, but not for 17-alpha-hydroxylase activity.

It is found in the endoplasmic reticulum membrane. The protein resides in the microsome membrane. It carries out the reaction a C21-steroid + reduced [NADPH--hemoprotein reductase] + O2 = a 17alpha-hydroxy-C21-steroid + oxidized [NADPH--hemoprotein reductase] + H2O + H(+). The enzyme catalyses progesterone + reduced [NADPH--hemoprotein reductase] + O2 = 17alpha-hydroxyprogesterone + oxidized [NADPH--hemoprotein reductase] + H2O + H(+). It catalyses the reaction pregnenolone + reduced [NADPH--hemoprotein reductase] + O2 = 17alpha-hydroxypregnenolone + oxidized [NADPH--hemoprotein reductase] + H2O + H(+). The catalysed reaction is 17alpha-hydroxyprogesterone + reduced [NADPH--hemoprotein reductase] + O2 = androst-4-ene-3,17-dione + acetate + oxidized [NADPH--hemoprotein reductase] + H2O + 2 H(+). It carries out the reaction 17alpha-hydroxyprogesterone + reduced [NADPH--hemoprotein reductase] + O2 = 16alpha,17alpha-dihydroxyprogesterone + oxidized [NADPH--hemoprotein reductase] + H2O + H(+). The enzyme catalyses 16alpha,17alpha-dihydroxyprogesterone + reduced [NADPH--hemoprotein reductase] + O2 = 6beta,16alpha,17alpha-trihydroxyprogesterone + oxidized [NADPH--hemoprotein reductase] + H2O + H(+). It catalyses the reaction 17alpha-hydroxypregnenolone + reduced [NADPH--hemoprotein reductase] + O2 = 3beta-hydroxyandrost-5-en-17-one + acetate + oxidized [NADPH--hemoprotein reductase] + H2O + 2 H(+). The catalysed reaction is 16alpha,17alpha-dihydroxypregnenolone + reduced [NADPH--hemoprotein reductase] + O2 = 3beta,16alpha-dihydroxy-androst-5-en-17-one + acetate + oxidized [NADPH--hemoprotein reductase] + H2O + 2 H(+). It carries out the reaction 3beta-hydroxyandrost-5-en-17-one + reduced [NADPH--hemoprotein reductase] + O2 = 3beta,16alpha-dihydroxy-androst-5-en-17-one + oxidized [NADPH--hemoprotein reductase] + H2O + H(+). The enzyme catalyses androst-4-ene-3,17-dione + reduced [NADPH--hemoprotein reductase] + O2 = 16alpha-hydroxyandrost-4-ene-3,17-dione + oxidized [NADPH--hemoprotein reductase] + H2O + H(+). The protein operates within steroid hormone biosynthesis. It participates in steroid biosynthesis; glucocorticoid biosynthesis. Regulated predominantly by intracellular cAMP levels. The 17,20-lyase activity is stimulated by cytochrome b5, which acts as an allosteric effector increasing the Vmax of the lyase activity. Its function is as follows. A cytochrome P450 monooxygenase involved in corticoid and androgen biosynthesis. Catalyzes 17-alpha hydroxylation of C21 steroids, which is common for both pathways. A second oxidative step, required only for androgen synthesis, involves an acyl-carbon cleavage. The 17-alpha hydroxy intermediates, as part of adrenal glucocorticoids biosynthesis pathway, are precursors of cortisol. Hydroxylates steroid hormones, pregnenolone and progesterone to form 17-alpha hydroxy metabolites, followed by the cleavage of the C17-C20 bond to form C19 steroids, dehydroepiandrosterone (DHEA) and androstenedione. Has 16-alpha hydroxylase activity. Catalyzes 16-alpha hydroxylation of 17-alpha hydroxy pregnenolone, followed by the cleavage of the C17-C20 bond to form 16-alpha-hydroxy DHEA. Also 16-alpha hydroxylates androgens, relevant for estriol synthesis. Mechanistically, uses molecular oxygen inserting one oxygen atom into a substrate, and reducing the second into a water molecule, with two electrons provided by NADPH via cytochrome P450 reductase (CPR; NADPH-ferrihemoprotein reductase). This chain is Steroid 17-alpha-hydroxylase/17,20 lyase, found in Homo sapiens (Human).